The chain runs to 226 residues: Clarin-3 (226 aa).

The helical transmembrane segment at 8–28 (LMFLSGFLTSLGSVVVICSIL) threads the bilayer. N-linked (GlcNAc...) asparagine glycosylation occurs at N46. The next 3 helical transmembrane spans lie at 92 to 112 (VVIL…VFTF), 128 to 148 (GVYT…VLFV), and 181 to 201 (FWLT…IIFY).

This sequence belongs to the clarin family.

Its subcellular location is the membrane. The chain is Clarin-3 (Clrn3) from Mus musculus (Mouse).